A 457-amino-acid polypeptide reads, in one-letter code: Methylenetetrahydrofolate--tRNA-(uracil-5-)-methyltransferase TrmFO (457 aa).

12 to 17 contributes to the FAD binding site; that stretch reads GGGLAG.

This sequence belongs to the MnmG family. TrmFO subfamily. FAD is required as a cofactor.

Its subcellular location is the cytoplasm. It catalyses the reaction uridine(54) in tRNA + (6R)-5,10-methylene-5,6,7,8-tetrahydrofolate + NADH + H(+) = 5-methyluridine(54) in tRNA + (6S)-5,6,7,8-tetrahydrofolate + NAD(+). The enzyme catalyses uridine(54) in tRNA + (6R)-5,10-methylene-5,6,7,8-tetrahydrofolate + NADPH + H(+) = 5-methyluridine(54) in tRNA + (6S)-5,6,7,8-tetrahydrofolate + NADP(+). Its function is as follows. Catalyzes the folate-dependent formation of 5-methyl-uridine at position 54 (M-5-U54) in all tRNAs. The chain is Methylenetetrahydrofolate--tRNA-(uracil-5-)-methyltransferase TrmFO from Myxococcus xanthus (strain DK1622).